The sequence spans 90 residues: Small ribosomal subunit protein bS20 (90 aa).

It belongs to the bacterial ribosomal protein bS20 family.

Binds directly to 16S ribosomal RNA. The sequence is that of Small ribosomal subunit protein bS20 from Acidiphilium cryptum (strain JF-5).